Reading from the N-terminus, the 112-residue chain is cAMP-regulated phosphoprotein 19 (112 aa).

An N-acetylmethionine modification is found at Met-1. The segment covering 1 to 11 has biased composition (low complexity); the sequence is MSAEVPEAASA. The tract at residues 1–49 is disordered; that stretch reads MSAEVPEAASAEEQKEMEDKVTSPEKAEEAKLKARYPHLGQKPGGSDFL. Ser-2 is subject to N-acetylserine. Ser-2 and Ser-23 each carry phosphoserine. The span at 12 to 32 shows a compositional bias: basic and acidic residues; the sequence is EEQKEMEDKVTSPEKAEEAKL. Residues Ser-62 and Ser-104 each carry the phosphoserine; by GWL modification. The disordered stretch occupies residues 73–112; it reads KNKQLPTAAPDKTEVTGDHIPTPQDLPQRKPSLVASKLAG. At Ser-104 the chain carries Phosphoserine; by PKA. Lys-109 is subject to N6-acetyllysine.

It belongs to the endosulfine family. In terms of assembly, interacts (when phosphorylated at Ser-62) with PPP2R2D. Interacts with SNCA. Interacts with PPP2R2A; the interaction is direct and this interaction inhibits PP2A activity. Phosphorylation at Ser-62 by MASTL/GWL during mitosis is essential for interaction with PPP2R2D (PR55-delta) and subsequent inactivation of PP2A. Phosphorylated by PKA.

The protein localises to the cytoplasm. Protein phosphatase inhibitor that specifically inhibits protein phosphatase 2A (PP2A) during mitosis. Inhibition of PP2A is enhanced when ARPP19 is phosphorylated. When phosphorylated at Ser-62 during mitosis, specifically interacts with PPP2R2D (PR55-delta) and inhibits its activity, leading to inactivation of PP2A, an essential condition to keep cyclin-B1-CDK1 activity high during M phase. May indirectly enhance GAP-43 expression. This Homo sapiens (Human) protein is cAMP-regulated phosphoprotein 19 (ARPP19).